The chain runs to 188 residues: HTH-type transcriptional repressor AcnR (188 aa).

Residues 10–70 (TNSRQEILEG…ALAREDAARM (61 aa)) form the HTH tetR-type domain. A DNA-binding region (H-T-H motif) is located at residues 33 to 52 (TVRRLEEATGKSRGAIFHHF). Citrate contacts are provided by residues 79-80 (LV), arginine 130, and asparagine 134. Mg(2+) is bound at residue glutamate 181. Arginine 185 is a citrate binding site.

As to quaternary structure, homodimer.

In terms of biological role, acnR negatively controls the expression of the aconitase gene acn. Binds to the imperfect inverted repeat in the acn promoter region. This chain is HTH-type transcriptional repressor AcnR, found in Corynebacterium glutamicum (strain ATCC 13032 / DSM 20300 / JCM 1318 / BCRC 11384 / CCUG 27702 / LMG 3730 / NBRC 12168 / NCIMB 10025 / NRRL B-2784 / 534).